The chain runs to 273 residues: Tryptophan synthase alpha chain (273 aa).

Residues E49 and D60 each act as proton acceptor in the active site.

The protein belongs to the TrpA family. In terms of assembly, tetramer of two alpha and two beta chains.

The catalysed reaction is (1S,2R)-1-C-(indol-3-yl)glycerol 3-phosphate + L-serine = D-glyceraldehyde 3-phosphate + L-tryptophan + H2O. It functions in the pathway amino-acid biosynthesis; L-tryptophan biosynthesis; L-tryptophan from chorismate: step 5/5. Its function is as follows. The alpha subunit is responsible for the aldol cleavage of indoleglycerol phosphate to indole and glyceraldehyde 3-phosphate. The protein is Tryptophan synthase alpha chain of Albidiferax ferrireducens (strain ATCC BAA-621 / DSM 15236 / T118) (Rhodoferax ferrireducens).